The chain runs to 205 residues: Small heat shock protein hspG12 (205 aa).

The region spanning 35-205 (KTIIDILPPM…YSNTIKININ (171 aa)) is the sHSP domain. The tract at residues 99-147 (PSLLDTKEDEASIEEFDEDDIKPKSTETTSTLSNSKENKKDENKSKSTE) is disordered. Acidic residues predominate over residues 109–118 (ASIEEFDEDD). Positions 134–147 (KENKKDENKSKSTE) are enriched in basic and acidic residues.

The protein belongs to the small heat shock protein (HSP20) family.

This is Small heat shock protein hspG12 (hspG12) from Dictyostelium discoideum (Social amoeba).